A 387-amino-acid polypeptide reads, in one-letter code: Dual specificity mitogen-activated protein kinase kinase mek-2 (387 aa).

The interval 1-37 (MSSGKRRNPLGLSLPPTVNEQSESGEATAEEATATVP) is disordered. Positions 16–25 (PTVNEQSESG) are enriched in polar residues. A compositionally biased stretch (low complexity) spans 26–35 (EATAEEATAT). The Protein kinase domain maps to 73 to 360 (LQTEGELGHG…LKSLTADVFF (288 aa)). ATP-binding positions include 79 to 87 (LGHGNGGVV) and Lys-102. Asp-195 (proton acceptor) is an active-site residue. A phosphoserine mark is found at Ser-223 and Ser-227.

It belongs to the protein kinase superfamily. STE Ser/Thr protein kinase family. MAP kinase kinase subfamily. As to quaternary structure, interacts with ksr-1.

The enzyme catalyses L-seryl-[protein] + ATP = O-phospho-L-seryl-[protein] + ADP + H(+). It carries out the reaction L-threonyl-[protein] + ATP = O-phospho-L-threonyl-[protein] + ADP + H(+). The catalysed reaction is L-tyrosyl-[protein] + ATP = O-phospho-L-tyrosyl-[protein] + ADP + H(+). With respect to regulation, activated by tyrosine and threonine phosphorylation catalyzed by MAP kinase kinase kinases. In terms of biological role, functions in the let-60 Ras signaling pathway; acts downstream of lin-45 raf kinase, but before the sur-1/mpk-1 gene product in controlling vulval cell differentiation. Required for progression of developing oocytes through the pachytene stage. Plays a role in responses to M.nematophilum-mediated bacterial infection by promoting tail swelling and preventing constipation. Involved in fluid homeostasis. Positively regulates lifespan upstream of mpk-1. The polypeptide is Dual specificity mitogen-activated protein kinase kinase mek-2 (mek-2) (Caenorhabditis elegans).